Consider the following 732-residue polypeptide: MTVEPPVAIAPDAADLDLLSRGEHHNPHSILGAHPHPDGTVIRALRPHAEAVDAVIGGTSFSLEHLAHGVWGALVPYRDLMDYRLSTTWPGGHNDVSADGYRFLPTLGELDLHLFGEGRHERLWEILGAHRRRYDTPDGTVTGTSFAVWAPNARGVSVIGDFDGWSGRNYPMRVLGSTGVWELFVPGIEAGDLYKFRVHGPDGSVRDKADPMAFATEVPPATASRVSVSTYEWNDAEWLAQRAATEPAQSPMSVYEVHLASWRPGLNYREMAEQLAVHLTETGFTHVELLPVAEHPFGGSWGYQVTSYYAPTSRFGSPDDFRWFVDHLHAAGIGVIVDWVPAHFPKDEWALARFDGTPLYEHSDPQRGEQLDWGTYVFDFGRREVRNFLVANALYWLDEFHVDGLRVDAVASMLYLDYSRPEGGWTPNIHGGRENLEAVAFLQETNATVHKQHRGVVTIAEESTAWPGVTRATNVGGLGFNMKWNMGWMHDTLGFMAHDPVHRSYHHHEITFSLMYAWSENYLLPISHDEVVHGKGTLWTRMPGDDYAKAAGVRALLAYMWSHPGKQLLFMGQEFGQTAEWSEERGLDWYQLDDPYTGGFHRGLLRLVHDLNATYREHPALWTLDTSPGGFSWIDANDTANNVLSFLRYGTDGSILACLFNFSGSPHANYRVGLPERGEWREILNTDAEIYAGSGWGNLGAVTATSQPWHGRPASAEVALPANGAIWMSLER.

The active-site Nucleophile is Asp-408. Glu-461 serves as the catalytic Proton donor.

It belongs to the glycosyl hydrolase 13 family. GlgB subfamily. As to quaternary structure, monomer.

It catalyses the reaction Transfers a segment of a (1-&gt;4)-alpha-D-glucan chain to a primary hydroxy group in a similar glucan chain.. It functions in the pathway glycan biosynthesis; glycogen biosynthesis. Functionally, catalyzes the formation of the alpha-1,6-glucosidic linkages in glycogen by scission of a 1,4-alpha-linked oligosaccharide from growing alpha-1,4-glucan chains and the subsequent attachment of the oligosaccharide to the alpha-1,6 position. This Rhodococcus jostii (strain RHA1) protein is 1,4-alpha-glucan branching enzyme GlgB.